Reading from the N-terminus, the 199-residue chain is Elongation factor Ts, chloroplastic (199 aa).

The protein belongs to the EF-Ts family.

It is found in the plastid. The protein resides in the chloroplast. Associates with the EF-Tu.GDP complex and induces the exchange of GDP to GTP. It remains bound to the aminoacyl-tRNA.EF-Tu.GTP complex up to the GTP hydrolysis stage on the ribosome. In Galdieria sulphuraria (Red alga), this protein is Elongation factor Ts, chloroplastic (tsf).